Consider the following 321-residue polypeptide: Ferrochelatase (321 aa).

Fe cation-binding residues include His194 and Glu275.

The protein belongs to the ferrochelatase family.

It is found in the cytoplasm. It carries out the reaction heme b + 2 H(+) = protoporphyrin IX + Fe(2+). It participates in porphyrin-containing compound metabolism; protoheme biosynthesis; protoheme from protoporphyrin-IX: step 1/1. In terms of biological role, catalyzes the ferrous insertion into protoporphyrin IX. The polypeptide is Ferrochelatase (Wigglesworthia glossinidia brevipalpis).